Reading from the N-terminus, the 66-residue chain is Large ribosomal subunit protein bL35 (66 aa).

It belongs to the bacterial ribosomal protein bL35 family.

The sequence is that of Large ribosomal subunit protein bL35 from Deinococcus deserti (strain DSM 17065 / CIP 109153 / LMG 22923 / VCD115).